An 833-amino-acid polypeptide reads, in one-letter code: DNA gyrase subunit A (833 aa).

The 467-residue stretch at 34–500 (LPDVRDGLKP…AGDVRDIEDI (467 aa)) folds into the Topo IIA-type catalytic domain. Catalysis depends on Y122, which acts as the O-(5'-phospho-DNA)-tyrosine intermediate. The GyrA-box signature appears at 527-533 (QKRGGQG).

It belongs to the type II topoisomerase GyrA/ParC subunit family. In terms of assembly, heterotetramer, composed of two GyrA and two GyrB chains. In the heterotetramer, GyrA contains the active site tyrosine that forms a transient covalent intermediate with DNA, while GyrB binds cofactors and catalyzes ATP hydrolysis.

It localises to the cytoplasm. The enzyme catalyses ATP-dependent breakage, passage and rejoining of double-stranded DNA.. Functionally, a type II topoisomerase that negatively supercoils closed circular double-stranded (ds) DNA in an ATP-dependent manner to modulate DNA topology and maintain chromosomes in an underwound state. Negative supercoiling favors strand separation, and DNA replication, transcription, recombination and repair, all of which involve strand separation. Also able to catalyze the interconversion of other topological isomers of dsDNA rings, including catenanes and knotted rings. Type II topoisomerases break and join 2 DNA strands simultaneously in an ATP-dependent manner. The protein is DNA gyrase subunit A of Chlamydia muridarum (strain MoPn / Nigg).